A 623-amino-acid polypeptide reads, in one-letter code: mRNA-capping enzyme (623 aa).

Residues 13-224 (MGLPDRWLHC…IDNGRPSTSQ (212 aa)) form a TPase region. In terms of domain architecture, Tyrosine-protein phosphatase spans 44-196 (YDNQIAERRY…YDPTEDDKIL (153 aa)). Cys136 acts as the Phosphocysteine intermediate in catalysis. Residues 213–229 (TQIDNGRPSTSQQIPAT) are compositionally biased toward polar residues. Residues 213 to 243 (TQIDNGRPSTSQQIPATNGNNNQNGNQLSGG) are disordered. The segment covering 230-239 (NGNNNQNGNQ) has biased composition (low complexity). Positions 241 to 585 (SGGGDNSKLF…NPVTETYLIE (345 aa)) are GTase. Lys311 acts as the N6-GMP-lysine intermediate in catalysis. GTP is bound by residues Arg316, Arg331, 357–359 (DTE), 477–479 (KWK), and 553–558 (RERTDK). The tract at residues 603–623 (HHQIHQQQLHEGEPEARRQKL) is disordered. A compositionally biased stretch (basic and acidic residues) spans 610–623 (QLHEGEPEARRQKL).

This sequence in the N-terminal section; belongs to the non-receptor class of the protein-tyrosine phosphatase family. The protein in the C-terminal section; belongs to the eukaryotic GTase family.

It is found in the nucleus. It carries out the reaction a 5'-end triphospho-ribonucleoside in mRNA + H2O = a 5'-end diphospho-ribonucleoside in mRNA + phosphate + H(+). It catalyses the reaction a 5'-end diphospho-ribonucleoside in mRNA + GTP + H(+) = a 5'-end (5'-triphosphoguanosine)-ribonucleoside in mRNA + diphosphate. With respect to regulation, RNA triphosphatase activity is inhibited by magnesium. Its function is as follows. Bifunctional mRNA-capping enzyme exhibiting RNA 5'-triphosphate monophosphatase activity in the N-terminal part and mRNA guanylyltransferase activity in the C-terminal part. Catalyzes the first two steps of cap formation: by removing the gamma-phosphate from the 5'-triphosphate end of nascent mRNA to yield a diphosphate end, and by transferring the GMP moiety of GTP to the 5'-diphosphate terminus via a covalent enzyme-GMP reaction intermediate. In Caenorhabditis elegans, this protein is mRNA-capping enzyme (cel-1).